The sequence spans 309 residues: Mitochondrial phosphate carrier protein 1, mitochondrial (309 aa).

The Mitochondrial intermembrane segment spans residues 1-15 (MTRVKSKLDEELSSP). Residues 16-36 (WFYTVCTMGGMLSAGTTHLAI) form a helical membrane-spanning segment. Solcar repeat units lie at residues 16–100 (WFYT…FKTL), 109–193 (NRTS…SVEF), and 210–289 (QQLG…IKVL). Residues 37-74 (TPLDVLKVNMQVNPVKYNSIPSGFSTLLREHGHSYLWR) lie on the Mitochondrial matrix side of the membrane. A helical membrane pass occupies residues 75–94 (GWSGKLLGYGVQGGCRFGLY). Topologically, residues 95–111 (EYFKTLYSDVLPNHNRT) are mitochondrial intermembrane. The chain crosses the membrane as a helical span at residues 112–132 (SIYFLSSASAQIFADMALCPF). Residues 133-167 (EAIKVRVQTQPMFAKGLLDGFPRVYRSEGLAGFHR) are Mitochondrial matrix-facing. A helical transmembrane segment spans residues 168 to 187 (GLFPLWCRNLPFSMVMFSTF). The Mitochondrial intermembrane portion of the chain corresponds to 188-208 (EQSVEFIYQKIIQKRKQDCSK). Residues 209-229 (AQQLGVTCLAGYTAGAVGTII) traverse the membrane as a helical segment. Over 230–268 (SNPADVVLSSLYNNKAKNVLQAVRNIGFVGLFTRSLPVR) the chain is Mitochondrial matrix. A helical transmembrane segment spans residues 269-289 (ITIVGPVITLQWFFYDAIKVL). The Mitochondrial intermembrane segment spans residues 290-309 (SGFPTSGGVKKPVDAAKLSV).

The protein belongs to the mitochondrial carrier (TC 2.A.29) family. Expressed in stems, leaves and flowers. Strong expression in the stamens of flowers.

It is found in the mitochondrion inner membrane. Functionally, transport of phosphate groups from the cytosol to the mitochondrial matrix. Mediates salt stress tolerance through an ATP-dependent pathway and via modulation of the gibberellin metabolism. The chain is Mitochondrial phosphate carrier protein 1, mitochondrial (MPT1) from Arabidopsis thaliana (Mouse-ear cress).